The primary structure comprises 207 residues: Large ribosomal subunit protein bL25 (207 aa).

The protein belongs to the bacterial ribosomal protein bL25 family. CTC subfamily. In terms of assembly, part of the 50S ribosomal subunit; part of the 5S rRNA/L5/L18/L25 subcomplex. Contacts the 5S rRNA. Binds to the 5S rRNA independently of L5 and L18.

Its function is as follows. This is one of the proteins that binds to the 5S RNA in the ribosome where it forms part of the central protuberance. This Dictyoglomus turgidum (strain DSM 6724 / Z-1310) protein is Large ribosomal subunit protein bL25.